The sequence spans 307 residues: Malate dehydrogenase (307 aa).

Residues glycine 8 to glycine 13 and aspartate 32 contribute to the NAD(+) site. Positions 81 and 87 each coordinate substrate. Residues asparagine 94 and valine 117–asparagine 119 each bind NAD(+). Residues asparagine 119 and arginine 150 each contribute to the substrate site. Histidine 174 functions as the Proton acceptor in the catalytic mechanism.

This sequence belongs to the LDH/MDH superfamily. MDH type 3 family.

It carries out the reaction (S)-malate + NAD(+) = oxaloacetate + NADH + H(+). Its function is as follows. Catalyzes the reversible oxidation of malate to oxaloacetate. The sequence is that of Malate dehydrogenase from Dehalococcoides mccartyi (strain ATCC BAA-2266 / KCTC 15142 / 195) (Dehalococcoides ethenogenes (strain 195)).